Reading from the N-terminus, the 823-residue chain is Semaphorin-4B (823 aa).

An N-terminal signal peptide occupies residues 1–30; that stretch reads MGRASRSAVLRRALLLLLLLLLLRTTTTRA. Residues 31-703 lie on the Extracellular side of the membrane; the sequence is LGPRISVPLG…WGADKSYWNE (673 aa). The region spanning 34–510 is the Sema domain; the sequence is RISVPLGSEE…SHSGVVQVPV (477 aa). Asparagine 53, asparagine 56, and asparagine 83 each carry an N-linked (GlcNAc...) asparagine glycan. Residues cysteine 107 and cysteine 118 are joined by a disulfide bond. Asparagine 129 carries an N-linked (GlcNAc...) asparagine glycan. 3 disulfide bridges follow: cysteine 136/cysteine 145, cysteine 273/cysteine 386, and cysteine 297/cysteine 346. N-linked (GlcNAc...) asparagine glycosylation is found at asparagine 397 and asparagine 512. The PSI domain occupies 512–582; that stretch reads NCSLYPTCGD…RFLVPGKPCK (71 aa). Residues cysteine 513 and cysteine 530 are joined by a disulfide bond. N-linked (GlcNAc...) asparagine glycosylation is found at asparagine 567, asparagine 615, and asparagine 680. In terms of domain architecture, Ig-like C2-type spans 589-649; it reads NTVNTLACPL…FQCWSIEEGF (61 aa). Cysteines 596 and 642 form a disulfide. A helical membrane pass occupies residues 704 to 724; the sequence is FLVMCTLFVFAMVLLFLFFLY. At 725 to 823 the chain is on the cytoplasmic side; it reads RHRDGMKLFL…LGSEIRDSVV (99 aa). Serine 779, serine 780, serine 804, and serine 816 each carry phosphoserine.

Belongs to the semaphorin family. Interacts with GIPC PDZ domain.

The protein localises to the membrane. Inhibits axonal extension by providing local signals to specify territories inaccessible for growing axons. The protein is Semaphorin-4B of Mus musculus (Mouse).